A 249-amino-acid polypeptide reads, in one-letter code: Putative SAP domain-containing protein 049L (249 aa).

Basic and acidic residues-rich tracts occupy residues methionine 1–proline 12, proline 22–cysteine 38, and lysine 95–glutamate 107. The disordered stretch occupies residues methionine 1 to glycine 110. The SAP domain maps to leucine 119–aspartate 153.

The protein is Putative SAP domain-containing protein 049L of Frog virus 3 (isolate Goorha) (FV-3).